Consider the following 210-residue polypeptide: Large ribosomal subunit protein uL3 (210 aa).

The segment at 133-152 (ATHGNSLSHRVHGSTGQNQT) is disordered. Gln151 bears the N5-methylglutamine mark.

The protein belongs to the universal ribosomal protein uL3 family. In terms of assembly, part of the 50S ribosomal subunit. Forms a cluster with proteins L14 and L19. Post-translationally, methylated by PrmB.

One of the primary rRNA binding proteins, it binds directly near the 3'-end of the 23S rRNA, where it nucleates assembly of the 50S subunit. The chain is Large ribosomal subunit protein uL3 from Francisella philomiragia subsp. philomiragia (strain ATCC 25017 / CCUG 19701 / FSC 153 / O#319-036).